The sequence spans 394 residues: Penicillopepsin-2 (394 aa).

Residues 1-20 form the signal peptide; sequence MVVFSKITVVLAGLATVASA. The propeptide at 21–71 is activation peptide; the sequence is VPTGTSRKSTFTVNQKARPVAQAKAINLPGMYASALSKYGAAVPASVKAAA. Residues 87–391 enclose the Peptidase A1 domain; it reads YLTPVNVGGT…DANGPRLGFA (305 aa). Aspartate 103 is an active-site residue. The N-linked (GlcNAc...) asparagine glycan is linked to asparagine 132. Residue aspartate 283 is part of the active site. Cysteine 319 and cysteine 354 are oxidised to a cystine.

The protein belongs to the peptidase A1 family. Monomer.

Its subcellular location is the secreted. It carries out the reaction Hydrolysis of proteins with broad specificity similar to that of pepsin A, preferring hydrophobic residues at P1 and P1', but also cleaving 20-Gly-|-Glu-21 in the B chain of insulin. Clots milk, and activates trypsinogen.. Its function is as follows. Secreted aspartic endopeptidase that allows assimilation of proteinaceous substrates. The scissile peptide bond is attacked by a nucleophilic water molecule activated by two aspartic residues in the active site. Shows a broad primary substrate specificity. Favors hydrophobic residues at the P1 and P1' positions, but can also activate trypsinogen and hydrolyze the B chain of insulin between positions 'Gly-20' and 'Glu-21'. The protein is Penicillopepsin-2 of Penicillium janthinellum (Penicillium vitale).